The sequence spans 173 residues: Thiol-disulfide oxidoreductase ResA (173 aa).

The helical; Signal-anchor for type II membrane protein transmembrane segment at 10–29 threads the bilayer; sequence VIILLILSGAVGFTLYQGFF. The 139-residue stretch at 35–173 folds into the Thioredoxin domain; sequence MQIGKEAPNF…LEGYLKKITP (139 aa). A disulfide bond links Cys-73 and Cys-76.

It belongs to the thioredoxin family. ResA subfamily.

The protein localises to the cell membrane. The protein operates within protein modification; cytochrome c assembly. Functionally, thiol-disulfide oxidoreductase which is required in disulfide reduction during c-type cytochrome synthesis. May accept reducing equivalents from CcdA, leading to breakage of disulfide bonds in apocytochrome c; following this reduction heme can be covalently attached. The polypeptide is Thiol-disulfide oxidoreductase ResA (Bacillus thuringiensis (strain Al Hakam)).